Reading from the N-terminus, the 201-residue chain is Probable molybdenum cofactor guanylyltransferase (201 aa).

Residues 6–8, lysine 18, aspartate 65, and aspartate 97 each bind GTP; that span reads LAG. Aspartate 97 provides a ligand contact to Mg(2+).

This sequence belongs to the MobA family. Requires Mg(2+) as cofactor.

It localises to the cytoplasm. The enzyme catalyses Mo-molybdopterin + GTP + H(+) = Mo-molybdopterin guanine dinucleotide + diphosphate. Its function is as follows. Transfers a GMP moiety from GTP to Mo-molybdopterin (Mo-MPT) cofactor (Moco or molybdenum cofactor) to form Mo-molybdopterin guanine dinucleotide (Mo-MGD) cofactor. The protein is Probable molybdenum cofactor guanylyltransferase of Staphylococcus epidermidis (strain ATCC 35984 / DSM 28319 / BCRC 17069 / CCUG 31568 / BM 3577 / RP62A).